Reading from the N-terminus, the 434-residue chain is Methylenetetrahydrofolate--tRNA-(uracil-5-)-methyltransferase TrmFO (434 aa).

9–14 (GAGLAG) lines the FAD pocket.

Belongs to the MnmG family. TrmFO subfamily. Requires FAD as cofactor.

It localises to the cytoplasm. It catalyses the reaction uridine(54) in tRNA + (6R)-5,10-methylene-5,6,7,8-tetrahydrofolate + NADH + H(+) = 5-methyluridine(54) in tRNA + (6S)-5,6,7,8-tetrahydrofolate + NAD(+). The enzyme catalyses uridine(54) in tRNA + (6R)-5,10-methylene-5,6,7,8-tetrahydrofolate + NADPH + H(+) = 5-methyluridine(54) in tRNA + (6S)-5,6,7,8-tetrahydrofolate + NADP(+). Functionally, catalyzes the folate-dependent formation of 5-methyl-uridine at position 54 (M-5-U54) in all tRNAs. This Listeria monocytogenes serotype 4b (strain F2365) protein is Methylenetetrahydrofolate--tRNA-(uracil-5-)-methyltransferase TrmFO.